A 786-amino-acid chain; its full sequence is LPS-assembly protein LptD (786 aa).

Positions 1–24 are cleaved as a signal peptide; that stretch reads MKKRIPTLLATMIASALYSHQGLA. Intrachain disulfides connect Cys31–Cys726 and Cys173–Cys727.

The protein belongs to the LptD family. In terms of assembly, component of the lipopolysaccharide transport and assembly complex. Interacts with LptE and LptA. In terms of processing, contains two intramolecular disulfide bonds.

The protein localises to the cell outer membrane. In terms of biological role, together with LptE, is involved in the assembly of lipopolysaccharide (LPS) at the surface of the outer membrane. In Salmonella typhimurium (strain LT2 / SGSC1412 / ATCC 700720), this protein is LPS-assembly protein LptD.